A 127-amino-acid chain; its full sequence is UPF0102 protein SYNAS_23220 (127 aa).

Belongs to the UPF0102 family.

This Syntrophus aciditrophicus (strain SB) protein is UPF0102 protein SYNAS_23220.